The chain runs to 722 residues: MSFCLTELHLWSLKSTLHIADRDIGVYQYYDKKDPSVSATEHGNLEEKQRLAESRDYPWTLKNRRPEKLRDSLKELEELMQSSPCVLSKWKSKYICQLLFGSGVLVSLSLSGPQLEKVVIDRSLVGKLISDTISDALLTDSFIILSFLAQNKLCFIQFTKKMDSLDGNKRLEKLSALDLKISYYDIPGPANRTIDRHLAVNSTQDLVVCWWPLVSDDVWPWTPVSSEKDRANMLLLGFTQGGLEVLSFVRTEWSPLDVHFGTKQPYQVFTVECSVSVDKEPMADSCIYESVRNKLHCVSVTRIPLRSKAISCCRNSTEDKLIVGCEDSSVILYEAHRGVTLLAQAELRPSLISCHPSGAILLVGSNQGELQIFDIALSPINIQLLAEDYSPKETLQFKKFFDVSSSLVQMQWMAPPVVFQKPKRGEICDLLFLRFNKGPLGVLLFKLGILTRGQLGLVDLILQYIHYSEVYEAISILRSMDWDTLGQQCLIGMGTIVNHLLRQRLTPEREAQLEASLGTFYAPTRPLLDTTILEYREPVSKYARRLFHHLLRYKRFEKAFLLAVDIGARDLFMDIHYLALDMGELALAEVARRRAHDIDVESVSSGVELLGPLDRRDMLNEGFASSALMPEGENKFPGLLPSIGSTHMQTLQQKIPNGPSSRWAIERRTEEEEEEEEEEEEELCTDSSGATTWNAEGELKEDQRKQDIGDVGSLRMVHFGLV.

2 WD repeats span residues 305–343 (LRSKAISCCRNSTEDKLIVGCEDSSVILYEAHRGVTLLA) and 344–383 (QAELRPSLISCHPSGAILLVGSNQGELQIFDIALSPINIQ). The interval 655 to 710 (IPNGPSSRWAIERRTEEEEEEEEEEEEELCTDSSGATTWNAEGELKEDQRKQDIGD) is disordered. Acidic residues predominate over residues 671 to 684 (EEEEEEEEEEEELC). Polar residues predominate over residues 685 to 694 (TDSSGATTWN). The span at 697–708 (GELKEDQRKQDI) shows a compositional bias: basic and acidic residues.

It belongs to the WD repeat fritz family. As to quaternary structure, component of the CPLANE (ciliogenesis and planar polarity effectors) complex, composed of INTU, FUZ and WDPCP. Interacts with CPLANE1.

The protein localises to the cell membrane. It localises to the cytoplasm. The protein resides in the cytoskeleton. It is found in the cilium axoneme. Its subcellular location is the cilium basal body. Functionally, probable effector of the planar cell polarity signaling pathway which regulates the septin cytoskeleton in both ciliogenesis and collective cell movements. Together with FUZ and WDPCP proposed to function as core component of the CPLANE (ciliogenesis and planar polarity effectors) complex involved in the recruitment of peripheral IFT-A proteins to basal bodies. Binds phosphatidylinositol 3-phosphate with highest affinity, followed by phosphatidylinositol 4-phosphate and phosphatidylinositol 5-phosphate. The protein is WD repeat-containing and planar cell polarity effector protein fritz homolog (Wdpcp) of Mus musculus (Mouse).